The chain runs to 260 residues: Tryptophan synthase alpha chain (260 aa).

Active-site proton acceptor residues include Glu-52 and Asp-63.

The protein belongs to the TrpA family. In terms of assembly, tetramer of two alpha and two beta chains.

The catalysed reaction is (1S,2R)-1-C-(indol-3-yl)glycerol 3-phosphate + L-serine = D-glyceraldehyde 3-phosphate + L-tryptophan + H2O. The protein operates within amino-acid biosynthesis; L-tryptophan biosynthesis; L-tryptophan from chorismate: step 5/5. The alpha subunit is responsible for the aldol cleavage of indoleglycerol phosphate to indole and glyceraldehyde 3-phosphate. This is Tryptophan synthase alpha chain from Streptococcus thermophilus (strain ATCC BAA-250 / LMG 18311).